The primary structure comprises 195 residues: dCTP deaminase (195 aa).

DCTP-binding positions include 110–115 (RSSLAR), aspartate 128, 136–138 (VLE), tyrosine 171, lysine 178, and glutamine 182. Glutamate 138 (proton donor/acceptor) is an active-site residue. Positions 171–195 (YSSRKDAKYKNQQSAVASRIDEDKE) are disordered.

The protein belongs to the dCTP deaminase family. In terms of assembly, homotrimer.

It catalyses the reaction dCTP + H2O + H(+) = dUTP + NH4(+). The protein operates within pyrimidine metabolism; dUMP biosynthesis; dUMP from dCTP (dUTP route): step 1/2. Its function is as follows. Catalyzes the deamination of dCTP to dUTP. The sequence is that of dCTP deaminase from Haemophilus influenzae (strain ATCC 51907 / DSM 11121 / KW20 / Rd).